The primary structure comprises 401 residues: S-adenosylmethionine synthase (401 aa).

An ATP-binding site is contributed by H15. Mg(2+) is bound at residue D17. E43 provides a ligand contact to K(+). 2 residues coordinate L-methionine: E56 and Q99. The segment at 99 to 109 (QSPEIGAGVDT) is flexible loop. The interval 101–132 (PEIGAGVDTSHEVRGSSSTDEDDRQGAGDQGL) is disordered. Residues 174 to 176 (DGK), D254, 260 to 261 (RK), A277, and K281 contribute to the ATP site. D254 provides a ligand contact to L-methionine. L-methionine is bound at residue K285.

The protein belongs to the AdoMet synthase family. As to quaternary structure, homotetramer; dimer of dimers. Mg(2+) is required as a cofactor. It depends on K(+) as a cofactor.

It is found in the cytoplasm. It catalyses the reaction L-methionine + ATP + H2O = S-adenosyl-L-methionine + phosphate + diphosphate. The protein operates within amino-acid biosynthesis; S-adenosyl-L-methionine biosynthesis; S-adenosyl-L-methionine from L-methionine: step 1/1. Functionally, catalyzes the formation of S-adenosylmethionine (AdoMet) from methionine and ATP. The overall synthetic reaction is composed of two sequential steps, AdoMet formation and the subsequent tripolyphosphate hydrolysis which occurs prior to release of AdoMet from the enzyme. The chain is S-adenosylmethionine synthase from Corynebacterium urealyticum (strain ATCC 43042 / DSM 7109).